The following is a 397-amino-acid chain: tRNA-specific 2-thiouridylase MnmA (397 aa).

Residues 19 to 26 (AMSGGVDS) and leucine 45 contribute to the ATP site. Catalysis depends on cysteine 113, which acts as the Nucleophile. A disulfide bridge connects residues cysteine 113 and cysteine 210. Glycine 137 provides a ligand contact to ATP. The interaction with tRNA stretch occupies residues 160 to 162 (RDQ). The active-site Cysteine persulfide intermediate is cysteine 210.

This sequence belongs to the MnmA/TRMU family.

Its subcellular location is the cytoplasm. The enzyme catalyses S-sulfanyl-L-cysteinyl-[protein] + uridine(34) in tRNA + AH2 + ATP = 2-thiouridine(34) in tRNA + L-cysteinyl-[protein] + A + AMP + diphosphate + H(+). Catalyzes the 2-thiolation of uridine at the wobble position (U34) of tRNA, leading to the formation of s(2)U34. This is tRNA-specific 2-thiouridylase MnmA from Rhodopseudomonas palustris (strain ATCC BAA-98 / CGA009).